A 321-amino-acid polypeptide reads, in one-letter code: Peptide transport system permease protein SapB (321 aa).

Over 1–8 (MIIFTLRR) the chain is Cytoplasmic. A helical transmembrane segment spans residues 9-29 (LLLLLVTLFFLTFIGFSLSYF). Topologically, residues 30-80 (TPHAPLQGASLWNAWVFWFNGLLHWDFGVSSINGQLISEQLKEVFPATMEL) are periplasmic. In terms of domain architecture, ABC transmembrane type-1 spans 74–302 (FPATMELCIL…SLVIVVNVIS (229 aa)). The helical transmembrane segment at 81-101 (CILAFGFALMVGIPVGMLAGV) threads the bilayer. Residues 102-113 (TRSKWPDRFISA) are Cytoplasmic-facing. Residues 114-134 (LALLGFSIPVFWLALLLTLFF) traverse the membrane as a helical segment. Residues 135–174 (SLTLGWLPVSGRFDLLYEVKPVTGFAIIDAWISDSPWRDE) lie on the Periplasmic side of the membrane. Residues 175–195 (MVMSAIRHMVLPVLTLSVAPT) form a helical membrane-spanning segment. At 196-248 (TEVIRLMRISTIEVYDQNYVKAAATRGLSRFTILRRHVLHNALPPVIPRLGLQ) the chain is on the cytoplasmic side. The chain crosses the membrane as a helical span at residues 249–269 (FSTMLTLAMITEMVFSWPGLG). Residues 270–280 (RWLIHAIRQQD) are Periplasmic-facing. The helical transmembrane segment at 281-301 (YAAISAGVMVIGSLVIVVNVI) threads the bilayer. Residues 302–321 (SDILGAMANPLKHKEWYALR) lie on the Cytoplasmic side of the membrane.

The protein belongs to the binding-protein-dependent transport system permease family. OppBC subfamily.

The protein resides in the cell inner membrane. Functionally, involved in a peptide intake transport system that plays a role in the resistance to antimicrobial peptides. This chain is Peptide transport system permease protein SapB, found in Salmonella typhimurium (strain LT2 / SGSC1412 / ATCC 700720).